A 703-amino-acid polypeptide reads, in one-letter code: Centrosomal protein of 63 kDa (703 aa).

The residue at position 1 (methionine 1) is an N-acetylmethionine. Coiled coils occupy residues glutamate 22–glutamate 199, methionine 242–valine 306, leucine 353–methionine 533, and histidine 676–lysine 703. Serine 278 is subject to Phosphoserine.

It belongs to the CEP63 family. In terms of assembly, interacts with CEP152 and CDK1; these interactions recruit both ligands to centrosomes. Interacts with CDK2, CDK5RAP2, WDR62, CEP90, KIAA0753/moonraker and CCDC14. CEP63, CDK5RAP2, CEP152, WDR62 are proposed to form a stepwise assembled complex at the centrosome forming a ring near parental centrioles. Interacts with CCDC57; the interaction is required for their location to proximal end of centrioles. Interacts with FXR1; promoting its stabilization. (Microbial infection) Interacts with zika virus serine protease NS3; this interaction disorganizes the centrosome. Post-translationally, polyubiquitinated via 'Lys-48'-linked ubiquitin, leading to its degradation. Deubiquitinated by USP36, promoting its stabilization.

It localises to the cytoplasm. The protein localises to the cytoskeleton. Its subcellular location is the microtubule organizing center. It is found in the centrosome. The protein resides in the centriole. It localises to the centriolar satellite. Required for normal spindle assembly. Plays a key role in mother-centriole-dependent centriole duplication; the function seems also to involve CEP152, CDK5RAP2 and WDR62 through a stepwise assembled complex at the centrosome that recruits CDK2 required for centriole duplication. Reported to be required for centrosomal recruitment of CEP152; however, this function has been questioned. Also recruits CDK1 to centrosomes. Plays a role in DNA damage response. Following DNA damage, such as double-strand breaks (DSBs), is removed from centrosomes; this leads to the inactivation of spindle assembly and delay in mitotic progression. Promotes stabilization of FXR1 protein by inhibiting FXR1 ubiquitination. This chain is Centrosomal protein of 63 kDa, found in Homo sapiens (Human).